A 256-amino-acid polypeptide reads, in one-letter code: Dihydroorotate dehydrogenase B (NAD(+)), electron transfer subunit (256 aa).

The FAD-binding FR-type domain occupies 1–101; it reads MKKAHLTVQS…LGPLGNGFPV (101 aa). FAD-binding positions include 52–55, 69–71, and 76–77; these read RPLS, IYR, and GT. Residues Cys-220, Cys-225, Cys-228, and Cys-243 each contribute to the [2Fe-2S] cluster site.

It belongs to the PyrK family. In terms of assembly, heterotetramer of 2 PyrK and 2 PyrD type B subunits. It depends on [2Fe-2S] cluster as a cofactor. Requires FAD as cofactor.

The protein operates within pyrimidine metabolism; UMP biosynthesis via de novo pathway; orotate from (S)-dihydroorotate (NAD(+) route): step 1/1. Its function is as follows. Responsible for channeling the electrons from the oxidation of dihydroorotate from the FMN redox center in the PyrD type B subunit to the ultimate electron acceptor NAD(+). The polypeptide is Dihydroorotate dehydrogenase B (NAD(+)), electron transfer subunit (Bacillus velezensis (strain DSM 23117 / BGSC 10A6 / LMG 26770 / FZB42) (Bacillus amyloliquefaciens subsp. plantarum)).